The chain runs to 87 residues: Kappa 1a-bungarotoxin (87 aa).

Positions M1–T21 are cleaved as a signal peptide. 5 cysteine pairs are disulfide-bonded: C24/C42, C35/C63, C48/C52, C67/C79, and C80/C85.

This sequence belongs to the three-finger toxin family. Long-chain subfamily. Kappa-neurotoxin sub-subfamily. Homo- and heterodimer; non-covalently linked. In terms of tissue distribution, expressed by the venom gland.

It localises to the secreted. Postsynaptic neurotoxin that binds and inhibits neuronal nicotinic acetylcholine receptors (nAChR) with high affinity (IC(50)&lt;100 nM). Is a selective, and slowly reversible antagonist of alpha-3/CHRNA3-containing and some alpha-4/CHRNA4-containing AChRs. The protein is Kappa 1a-bungarotoxin of Bungarus candidus (Malayan krait).